Here is a 98-residue protein sequence, read N- to C-terminus: MATLTGLTFGGQVWTPQFVEAVNQDKCIGCGRCFKACGRNVLILQALNENGEFVEDEEGEEIERKVMSIIHPEYCIGCQACARACPKNCYTHSPLEHN.

4Fe-4S ferredoxin-type domains follow at residues 18–47 (FVEA…LQAL) and 66–95 (VMSI…HSPL). Residues cysteine 27, cysteine 30, cysteine 33, cysteine 37, cysteine 75, cysteine 78, cysteine 81, and cysteine 85 each coordinate [4Fe-4S] cluster.

Homodimer. [4Fe-4S] cluster serves as cofactor.

Functionally, ferredoxins are iron-sulfur proteins that transfer electrons in a wide variety of metabolic reactions. This chain is Ferredoxin-3 (fdxB), found in Trichormus variabilis (strain ATCC 29413 / PCC 7937) (Anabaena variabilis).